Here is a 436-residue protein sequence, read N- to C-terminus: Serine/threonine-protein kinase STK11 (436 aa).

Ser-31 carries the phosphoserine modification. 2 positions are modified to N6-acetyllysine: Lys-44 and Lys-48. The segment at Leu-45–Asn-90 is sufficient for interaction with SIRT1. A Protein kinase domain is found at Tyr-49–Phe-309. ATP is bound by residues Leu-55 to Val-63 and Lys-78. N6-acetyllysine is present on residues Lys-96 and Lys-97. Catalysis depends on Asp-176, which acts as the Proton acceptor. At Thr-189 the chain carries Phosphothreonine; by autocatalysis. N6-acetyllysine is present on residues Lys-296 and Lys-311. Ser-325 bears the Phosphoserine mark. At Thr-336 the chain carries Phosphothreonine; by autocatalysis. At Thr-366 the chain carries Phosphothreonine; by ATM and autocatalysis. Residues Gly-397 to Val-421 form a disordered region. Phosphoserine is present on Ser-403. Lys-420 carries the N6-acetyllysine modification. Cys-422 is lipidated: S-palmitoyl cysteine. Position 426 is an N6-acetyllysine (Lys-426). At Ser-431 the chain carries Phosphoserine; by autocatalysis, PKA, PKC/PRKCZ and RPS6KA1. Cys-433 carries the post-translational modification Cysteine methyl ester. Cys-433 is lipidated: S-farnesyl cysteine. Lys-434 carries the post-translational modification N6-acetyllysine. Residues Lys-434–Gln-436 constitute a propeptide, removed in mature form.

Belongs to the protein kinase superfamily. CAMK Ser/Thr protein kinase family. LKB1 subfamily. Catalytic component of a trimeric complex composed of STK11/LKB1, STRAD (STRADA or STRADB) and CAB39/MO25 (CAB39/MO25alpha or CAB39L/MO25beta): the complex tethers STK11/LKB1 in the cytoplasm and stimulates its catalytic activity. Found in a ternary complex composed of SMAD4, STK11/LKB1 and STK11IP. Interacts with NR4A1, p53/TP53, SMAD4, STK11IP and WDR6. Interacts with NISCH; this interaction may increase STK11 activity. Interacts with SIRT1; the interaction deacetylates STK11. Interacts with CDKN1A. Requires Mg(2+) as cofactor. Mn(2+) serves as cofactor. In terms of processing, phosphorylated by ATM at Thr-366 following ionizing radiation (IR). Phosphorylation at Ser-431 by RPS6KA1 and/or some PKA is required to inhibit cell growth. Phosphorylation at Ser-431 is also required during neuronal polarization to mediate phosphorylation of BRSK1 and BRSK2. Phosphorylation by PKC/PRKCZ at Ser-397 in isoform 2 promotes metformin (or peroxynitrite)-induced nuclear export of STK11 and activation of AMPK. UV radiation -induced phosphorylation at Thr-366 mediates CDKN1A degradation. Acetylated. Deacetylation at Lys-48 enhances cytoplasmic localization and kinase activity in vitro. As to expression, expressed in brain, heart, testis, skeletal muscle and spleen, and weakly in liver and kidney. Isoform 1 is expressed at highest levels in the brain. Isoform 2 is expressed at highest levels in the testis, primarily in postmitotic developing germ cells (at protein level).

The protein localises to the nucleus. It localises to the cytoplasm. It is found in the membrane. Its subcellular location is the mitochondrion. It carries out the reaction L-seryl-[protein] + ATP = O-phospho-L-seryl-[protein] + ADP + H(+). The catalysed reaction is L-threonyl-[protein] + ATP = O-phospho-L-threonyl-[protein] + ADP + H(+). With respect to regulation, activated by forming a complex with STRAD (STRADA or STRADB) and CAB39/MO25 (CAB39/MO25alpha or CAB39L/MO25beta): STRADA (or STRADB)-binding promotes a conformational change of STK11/LKB1 in an active conformation, which is stabilized by CAB39/MO25alpha (or CAB39L/MO25beta) interacting with the STK11/LKB1 activation loop. Sequestration in the nucleus by NR4A1 prevents it from phosphorylating and activating cytoplasmic AMPK. Tumor suppressor serine/threonine-protein kinase that controls the activity of AMP-activated protein kinase (AMPK) family members, thereby playing a role in various processes such as cell metabolism, cell polarity, apoptosis and DNA damage response. Acts by phosphorylating the T-loop of AMPK family proteins, thus promoting their activity: phosphorylates PRKAA1, PRKAA2, BRSK1, BRSK2, MARK1, MARK2, MARK3, MARK4, NUAK1, NUAK2, SIK1, SIK2, SIK3 and SNRK but not MELK. Also phosphorylates non-AMPK family proteins such as STRADA, PTEN and possibly p53/TP53. Acts as a key upstream regulator of AMPK by mediating phosphorylation and activation of AMPK catalytic subunits PRKAA1 and PRKAA2 and thereby regulates processes including: inhibition of signaling pathways that promote cell growth and proliferation when energy levels are low, glucose homeostasis in liver, activation of autophagy when cells undergo nutrient deprivation, and B-cell differentiation in the germinal center in response to DNA damage. Also acts as a regulator of cellular polarity by remodeling the actin cytoskeleton. Required for cortical neuron polarization by mediating phosphorylation and activation of BRSK1 and BRSK2, leading to axon initiation and specification. Involved in DNA damage response: interacts with p53/TP53 and recruited to the CDKN1A/WAF1 promoter to participate in transcription activation. Able to phosphorylate p53/TP53; the relevance of such result in vivo is however unclear and phosphorylation may be indirect and mediated by downstream STK11/LKB1 kinase NUAK1. Also acts as a mediator of p53/TP53-dependent apoptosis via interaction with p53/TP53: translocates to the mitochondrion during apoptosis and regulates p53/TP53-dependent apoptosis pathways. Regulates UV radiation-induced DNA damage response mediated by CDKN1A. In association with NUAK1, phosphorylates CDKN1A in response to UV radiation and contributes to its degradation which is necessary for optimal DNA repair. Its function is as follows. Has a role in spermiogenesis. The polypeptide is Serine/threonine-protein kinase STK11 (Rattus norvegicus (Rat)).